Reading from the N-terminus, the 339-residue chain is 2,3,4,5-tetrahydropyridine-2,6-dicarboxylate N-succinyltransferase (339 aa).

Asp180 contributes to the Mg(2+) binding site. Residue Glu213 is the Acyl-anhydride intermediate of the active site. Succinyl-CoA-binding positions include Arg215, Gly230, Ser233, Ala256, Glu271–Ala272, Gly279, and Lys300.

It belongs to the type 2 tetrahydrodipicolinate N-succinyltransferase family. In terms of assembly, homotrimer.

The protein resides in the cytoplasm. The catalysed reaction is (S)-2,3,4,5-tetrahydrodipicolinate + succinyl-CoA + H2O = (S)-2-succinylamino-6-oxoheptanedioate + CoA. It participates in amino-acid biosynthesis; L-lysine biosynthesis via DAP pathway; LL-2,6-diaminopimelate from (S)-tetrahydrodipicolinate (succinylase route): step 1/3. Functionally, catalyzes the conversion of the cyclic tetrahydrodipicolinate (THDP) into the acyclic N-succinyl-L-2-amino-6-oxopimelate using succinyl-CoA. The protein is 2,3,4,5-tetrahydropyridine-2,6-dicarboxylate N-succinyltransferase of Bifidobacterium longum (strain NCC 2705).